The sequence spans 288 residues: NH(3)-dependent NAD(+) synthetase (288 aa).

46–53 (GISGGQDS) contributes to the ATP binding site. A Mg(2+)-binding site is contributed by Asp52. Arg153 is a deamido-NAD(+) binding site. Thr173 lines the ATP pocket. A Mg(2+)-binding site is contributed by Glu178. Lys186 and Asp193 together coordinate deamido-NAD(+). Lys202 and Thr224 together coordinate ATP. Residue 273–274 (HK) coordinates deamido-NAD(+).

This sequence belongs to the NAD synthetase family. As to quaternary structure, homodimer.

It catalyses the reaction deamido-NAD(+) + NH4(+) + ATP = AMP + diphosphate + NAD(+) + H(+). It participates in cofactor biosynthesis; NAD(+) biosynthesis; NAD(+) from deamido-NAD(+) (ammonia route): step 1/1. In terms of biological role, catalyzes the ATP-dependent amidation of deamido-NAD to form NAD. Uses ammonia as a nitrogen source. This Deinococcus geothermalis (strain DSM 11300 / CIP 105573 / AG-3a) protein is NH(3)-dependent NAD(+) synthetase.